A 498-amino-acid polypeptide reads, in one-letter code: L-amino acid oxidase (498 aa).

The signal sequence occupies residues 1–11; it reads SLLFLAAVGSC. A disulfide bond links cysteine 21 and cysteine 184. FAD contacts are provided by residues 54 to 55, 74 to 75, 74 to 78, arginine 82, and 98 to 101; these read MS, EA, EASER, and GPMR. A substrate-binding site is contributed by arginine 101. N-linked (GlcNAc...) asparagine glycosylation is present at asparagine 183. A substrate-binding site is contributed by histidine 234. Valine 272 contributes to the FAD binding site. A disulfide bond links cysteine 342 and cysteine 423. Tyrosine 383 contacts substrate. FAD contacts are provided by residues glutamate 468, 475 to 480, and 476 to 480; these read GWIDST and WIDST. 475–476 contributes to the substrate binding site; that stretch reads GW.

This sequence belongs to the flavin monoamine oxidase family. FIG1 subfamily. As to quaternary structure, homodimer; non-covalently linked. It depends on FAD as a cofactor. Post-translationally, N-glycosylated. Contains 18.73% carbohydrates. Expressed by the venom gland.

It localises to the secreted. The catalysed reaction is an L-alpha-amino acid + O2 + H2O = a 2-oxocarboxylate + H2O2 + NH4(+). The enzyme catalyses L-leucine + O2 + H2O = 4-methyl-2-oxopentanoate + H2O2 + NH4(+). Its activity is regulated as follows. Strongly inhibited by glutathione, and moderately inhibited by PMSF, acetate iodine and glutamic acid. Is also inhibited by Zn(2+) ions, but not by Ca(2+), Mg(2+) and Mn(2+). In terms of biological role, catalyzes an oxidative deamination of predominantly hydrophobic and aromatic L-amino acids, thus producing hydrogen peroxide that may contribute to the diverse toxic effects of this enzyme. This enzyme shows activity on L-Leu. This enzyme inhibits platelet aggregation in human platelet rich plasma induced by ADP (IC(50)=3.2 mg/mL), and shows antibacterial activities on both Gram-positive and Gram-negative bacteria (P.aeruginosa, V.cholerae, S.aureus, E.faecalis and E.coli). These two effects are due to hydrogen peroxide, since they are inhibited by catalase. It also induces edema in mouse paw pads but does not show hemolytic activity. This protein may also have activities in hemorrhage, and apoptosis. The polypeptide is L-amino acid oxidase (Bothrops pictus (Desert lancehead)).